Reading from the N-terminus, the 148-residue chain is Macrodomain Ter protein (148 aa).

Belongs to the MatP family. In terms of assembly, homodimer.

It is found in the cytoplasm. Required for spatial organization of the terminus region of the chromosome (Ter macrodomain) during the cell cycle. Prevents early segregation of duplicated Ter macrodomains during cell division. Binds specifically to matS, which is a 13 bp signature motif repeated within the Ter macrodomain. The protein is Macrodomain Ter protein of Haemophilus influenzae (strain PittGG).